A 128-amino-acid polypeptide reads, in one-letter code: Leucine-rich single-pass membrane protein 1 (128 aa).

Residue serine 24 is modified to Phosphoserine. The chain crosses the membrane as a helical span at residues 65–85; the sequence is VGLIIVLIISLALVSFVIFLI. The stretch at 87–111 forms a coiled coil; it reads QTENKMEDVSRRLAAEGKDIDDLKK.

The protein resides in the membrane. The protein is Leucine-rich single-pass membrane protein 1 (LSMEM1) of Bos taurus (Bovine).